Reading from the N-terminus, the 271-residue chain is MQRIKLIIAYDGTNFCGWQLQPKLRTVQGDLEKAITRITGTTVRVHGSGRTDSGVHALGQVAHFDVDSCFASVKWQRALNSLLPDDVTILDAQLVSPEFHSRYSAIRKTYTYTLWLENSFFLPWRRHYVWKCGPLDFCALDQGMQYFLGEHDFSSFQNTGTEIKSTVRTIHEFKRYPGQTEQEMILEVCGSGFLKQMVRNMVGCLVRIGRGKAEPETVRSLLQMKDRTAAPATAPAQGLCMAGVYYGETGCGGTADTGRNQAQNCGINRED.

Catalysis depends on D52, which acts as the Nucleophile. Y110 lines the substrate pocket.

This sequence belongs to the tRNA pseudouridine synthase TruA family. As to quaternary structure, homodimer.

It catalyses the reaction uridine(38/39/40) in tRNA = pseudouridine(38/39/40) in tRNA. Its function is as follows. Formation of pseudouridine at positions 38, 39 and 40 in the anticodon stem and loop of transfer RNAs. The chain is tRNA pseudouridine synthase A from Maridesulfovibrio salexigens (strain ATCC 14822 / DSM 2638 / NCIMB 8403 / VKM B-1763) (Desulfovibrio salexigens).